The following is a 249-amino-acid chain: tRNA (guanine-N(1)-)-methyltransferase (249 aa).

Residues Gly-113 and 133–138 (VGDYVL) each bind S-adenosyl-L-methionine.

It belongs to the RNA methyltransferase TrmD family. Homodimer.

It localises to the cytoplasm. It carries out the reaction guanosine(37) in tRNA + S-adenosyl-L-methionine = N(1)-methylguanosine(37) in tRNA + S-adenosyl-L-homocysteine + H(+). Its function is as follows. Specifically methylates guanosine-37 in various tRNAs. The chain is tRNA (guanine-N(1)-)-methyltransferase from Tolumonas auensis (strain DSM 9187 / NBRC 110442 / TA 4).